The following is a 313-amino-acid chain: Apolipoprotein E (313 aa).

The N-terminal stretch at 1–18 (MKVLWVALVITLLAGCQA) is a signal peptide. 8 tandem repeats follow at residues 79 to 100 (VLMD…EQLG), 101 to 122 (PIAQ…ARLA), 123 to 144 (SDME…AVMG), 145 to 166 (QTTD…KRLL), 167 to 188 (RDAE…EGSE), 189 to 209 (RSVS…RGRA), 210 to 229 (GTLA…QKLR), and 230 to 251 (GRVE…EQLE). Residues 79-251 (VLMDETMKEV…HLEEIREQLE (173 aa)) form an 8 X 22 AA approximate tandem repeats region. The tract at residues 157–167 (HLRKLRKRLLR) is LDL and other lipoprotein receptors binding. 161–164 (LRKR) is a heparin binding site. A lipid-binding and lipoprotein association region spans residues 209–286 (AGTLASQTLR…SWFEPLVEDM (78 aa)). Residue 225–232 (HQKLRGRV) coordinates heparin. The tract at residues 262-313 (SQIRLQAEAFQARLKSWFEPLVEDMQRQWAGLVEKVQLAMATSSTSAPSENH) is homooligomerization. The segment at 274-286 (RLKSWFEPLVEDM) is specificity for association with VLDL.

It belongs to the apolipoprotein A1/A4/E family. In terms of assembly, homotetramer. May interact with ABCA1; functionally associated with ABCA1 in the biogenesis of HDLs. May interact with APP/A4 amyloid-beta peptide; the interaction is extremely stable in vitro but its physiological significance is unclear. May interact with MAPT. May interact with MAP2. In the cerebrospinal fluid, interacts with secreted SORL1. Interacts with PMEL; this allows the loading of PMEL luminal fragment on ILVs to induce fibril nucleation. Post-translationally, APOE exists as multiple glycosylated and sialylated glycoforms within cells and in plasma. The extent of glycosylation and sialylation are tissue and context specific. Glycated in plasma VLDL. In terms of processing, phosphorylated by FAM20C in the extracellular medium.

The protein localises to the secreted. The protein resides in the extracellular space. Its subcellular location is the extracellular matrix. It is found in the extracellular vesicle. It localises to the endosome. The protein localises to the multivesicular body. APOE is an apolipoprotein, a protein associating with lipid particles, that mainly functions in lipoprotein-mediated lipid transport between organs via the plasma and interstitial fluids. APOE is a core component of plasma lipoproteins and is involved in their production, conversion and clearance. Apolipoproteins are amphipathic molecules that interact both with lipids of the lipoprotein particle core and the aqueous environment of the plasma. As such, APOE associates with chylomicrons, chylomicron remnants, very low density lipoproteins (VLDL) and intermediate density lipoproteins (IDL) but shows a preferential binding to high-density lipoproteins (HDL). It also binds a wide range of cellular receptors including the LDL receptor/LDLR and the very low-density lipoprotein receptor/VLDLR that mediate the cellular uptake of the APOE-containing lipoprotein particles. Finally, APOE also has a heparin-binding activity and binds heparan-sulfate proteoglycans on the surface of cells, a property that supports the capture and the receptor-mediated uptake of APOE-containing lipoproteins by cells. This is Apolipoprotein E (APOE) from Balaenoptera acutorostrata scammoni (North Pacific minke whale).